Reading from the N-terminus, the 1086-residue chain is Tyrosine-protein kinase receptor svh-2 (1086 aa).

The N-terminal stretch at 1 to 34 is a signal peptide; the sequence is MVLGSSQSSAKELTTQSSIFRFLVLLLCFTSATG. At 35-651 the chain is on the extracellular side; sequence GQINGKLLNG…DKKGSSPGWK (617 aa). Residues Asn-276, Asn-299, Asn-461, Asn-554, and Asn-617 are each glycosylated (N-linked (GlcNAc...) asparagine). The chain crosses the membrane as a helical span at residues 652-672; it reads IAIAIISVMTIILIVAIIVYY. Residues 673–1086 lie on the Cytoplasmic side of the membrane; sequence MRNRFPRIKT…LLSECSETSV (414 aa). The Protein kinase domain occupies 735–996; sequence VDKLDPIGQG…SDLVTIIPNV (262 aa). ATP is bound by residues 741-749 and Lys-767; that span reads IGQGHYGVV. Asp-858 (proton acceptor) is an active-site residue. Tyr-890 carries the phosphotyrosine modification. The disordered stretch occupies residues 1056–1086; that stretch reads AELPSDSPSTSTAIPQSTPYQLLSECSETSV. The segment covering 1061–1086 has biased composition (polar residues); sequence DSPSTSTAIPQSTPYQLLSECSETSV.

It belongs to the protein kinase superfamily. Tyr protein kinase family. In terms of assembly, interacts (via cytoplasmic domain) with mlk-1. Interacts with shc-1 (via SH2 domain). May interact (when tyrosine-phosphorylated) with tns-1 (via SH2 domain). Post-translationally, may be autophosphorylated on Tyr-890 following dimerization. As to expression, expressed in body wall and vulva muscles, pharynx, intestine, excretory canals, distal tip cells and some neurons. Expressed in D-type motor neurons upon axon injury.

The protein localises to the cell membrane. The catalysed reaction is L-tyrosyl-[protein] + ATP = O-phospho-L-tyrosyl-[protein] + ADP + H(+). Functionally, receptor tyrosine kinase which may phosphorylate mlk-1, a component of the mlk-1, mek-1 and kgb-1 pathway. Involved in axon regeneration after injury by promoting the generation of productive and stable growth cones. The chain is Tyrosine-protein kinase receptor svh-2 from Caenorhabditis elegans.